The sequence spans 112 residues: Abdominal ganglion neuropeptides L5-67 (112 aa).

The signal sequence occupies residues 1-23; the sequence is MKTAVLLVCLAYVMAAILSLCAS. At phenylalanine 33 the chain carries Phenylalanine amide.

Post-translationally, the prohormone is proteolytically cleaved in 2 steps, yielding first 2 products: luqin and PRMP. In the second step, PRMP is cleaved to yield luqin-B and luqin-C. As to expression, neurons L2-4 and L6, also called giant dorsal LUQ (Left Upper Quadrant) neurons of the abdominal ganglion. Also expressed in smaller neurons in the CNS and in peripheral organs such as the kidney.

It is found in the secreted. This chain is Abdominal ganglion neuropeptides L5-67, found in Aplysia californica (California sea hare).